The following is an 863-amino-acid chain: Leucine--tRNA ligase (863 aa).

The short motif at 42-52 (PYPSGRLHMGH) is the 'HIGH' region element. The 'KMSKS' region motif lies at 622–626 (KMSKS). Lysine 625 provides a ligand contact to ATP.

This sequence belongs to the class-I aminoacyl-tRNA synthetase family.

The protein resides in the cytoplasm. The enzyme catalyses tRNA(Leu) + L-leucine + ATP = L-leucyl-tRNA(Leu) + AMP + diphosphate. The polypeptide is Leucine--tRNA ligase (Shewanella loihica (strain ATCC BAA-1088 / PV-4)).